A 142-amino-acid chain; its full sequence is Neuritin (142 aa).

Positions 1–27 are cleaved as a signal peptide; that stretch reads MGLKLNGRYISLILAVQIAYLVQAVRA. Gly116 is lipidated: GPI-anchor amidated glycine. The propeptide at 117 to 142 is removed in mature form; it reads AAGPLLPALPVLLVSLSAALATWLSF.

It belongs to the neuritin family. Component of the outer core of AMPAR complex. AMPAR complex consists of an inner core made of 4 pore-forming GluA/GRIA proteins (GRIA1, GRIA2, GRIA3 and GRIA4) and 4 major auxiliary subunits arranged in a twofold symmetry. One of the two pairs of distinct binding sites is occupied either by CNIH2, CNIH3 or CACNG2, CACNG3. The other harbors CACNG2, CACNG3, CACNG4, CACNG8 or GSG1L. This inner core of AMPAR complex is complemented by outer core constituents binding directly to the GluA/GRIA proteins at sites distinct from the interaction sites of the inner core constituents. Outer core constituents include at least PRRT1, PRRT2, CKAMP44/SHISA9, FRRS1L and NRN1. The proteins of the inner and outer core serve as a platform for other, more peripherally associated AMPAR constituents. Alone or in combination, these auxiliary subunits control the gating and pharmacology of the AMPAR complex and profoundly impact their biogenesis and protein processing.

The protein localises to the cell membrane. The protein resides in the synapse. Promotes neurite outgrowth and especially branching of neuritic processes in primary hippocampal and cortical cells. In Bos taurus (Bovine), this protein is Neuritin (NRN1).